The primary structure comprises 261 residues: Cytochrome c oxidase subunit 3 (261 aa).

Topologically, residues 1–15 (MTHQTHAYHMVNPSP) are mitochondrial matrix. Residues 16–34 (WPLTGALSALLLTSGLIMW) form a helical membrane-spanning segment. The Mitochondrial intermembrane portion of the chain corresponds to 35 to 40 (FHFNSF). The chain crosses the membrane as a helical span at residues 41 to 66 (LLVIIGLTCMLLTMYQWWRDIVREGT). The Mitochondrial matrix segment spans residues 67–72 (FQGHHT). Residues 73 to 105 (PVVQKGLRYGMVLFIVSEVFFFLGFFWAFYHSS) form a helical membrane-spanning segment. Over 106–128 (LAPTPELGGCWPPTGIHPLNPLE) the chain is Mitochondrial intermembrane. Residues 129–152 (VPLLNTSILLASGVSITWAHHSLM) traverse the membrane as a helical segment. Residues 153–155 (EGN) are Mitochondrial matrix-facing. The helical transmembrane segment at 156–183 (RKQMIQALSITILLGIYFTILQASEYYE) threads the bilayer. Topologically, residues 184-190 (SSFTISD) are mitochondrial intermembrane. A helical transmembrane segment spans residues 191–223 (GVYGSTFFVATGFHGLHVIIGTTFLIVCLLRQF). Topologically, residues 224–232 (NFHFTSTHH) are mitochondrial matrix. Residues 233–256 (FGFEAAAWYWHFVDVVWLFLYVSI) form a helical membrane-spanning segment. Topologically, residues 257–261 (YWWGS) are mitochondrial intermembrane.

This sequence belongs to the cytochrome c oxidase subunit 3 family. In terms of assembly, component of the cytochrome c oxidase (complex IV, CIV), a multisubunit enzyme composed of 14 subunits. The complex is composed of a catalytic core of 3 subunits MT-CO1, MT-CO2 and MT-CO3, encoded in the mitochondrial DNA, and 11 supernumerary subunits COX4I, COX5A, COX5B, COX6A, COX6B, COX6C, COX7A, COX7B, COX7C, COX8 and NDUFA4, which are encoded in the nuclear genome. The complex exists as a monomer or a dimer and forms supercomplexes (SCs) in the inner mitochondrial membrane with NADH-ubiquinone oxidoreductase (complex I, CI) and ubiquinol-cytochrome c oxidoreductase (cytochrome b-c1 complex, complex III, CIII), resulting in different assemblies (supercomplex SCI(1)III(2)IV(1) and megacomplex MCI(2)III(2)IV(2)).

It is found in the mitochondrion inner membrane. It catalyses the reaction 4 Fe(II)-[cytochrome c] + O2 + 8 H(+)(in) = 4 Fe(III)-[cytochrome c] + 2 H2O + 4 H(+)(out). Its function is as follows. Component of the cytochrome c oxidase, the last enzyme in the mitochondrial electron transport chain which drives oxidative phosphorylation. The respiratory chain contains 3 multisubunit complexes succinate dehydrogenase (complex II, CII), ubiquinol-cytochrome c oxidoreductase (cytochrome b-c1 complex, complex III, CIII) and cytochrome c oxidase (complex IV, CIV), that cooperate to transfer electrons derived from NADH and succinate to molecular oxygen, creating an electrochemical gradient over the inner membrane that drives transmembrane transport and the ATP synthase. Cytochrome c oxidase is the component of the respiratory chain that catalyzes the reduction of oxygen to water. Electrons originating from reduced cytochrome c in the intermembrane space (IMS) are transferred via the dinuclear copper A center (CU(A)) of subunit 2 and heme A of subunit 1 to the active site in subunit 1, a binuclear center (BNC) formed by heme A3 and copper B (CU(B)). The BNC reduces molecular oxygen to 2 water molecules using 4 electrons from cytochrome c in the IMS and 4 protons from the mitochondrial matrix. The chain is Cytochrome c oxidase subunit 3 (MT-CO3) from Osphranter robustus (Wallaroo).